Consider the following 223-residue polypeptide: Large ribosomal subunit protein uL3 (223 aa).

The protein belongs to the universal ribosomal protein uL3 family. Part of the 50S ribosomal subunit. Forms a cluster with proteins L14 and L19.

Functionally, one of the primary rRNA binding proteins, it binds directly near the 3'-end of the 23S rRNA, where it nucleates assembly of the 50S subunit. The chain is Large ribosomal subunit protein uL3 from Cutibacterium acnes (strain DSM 16379 / KPA171202) (Propionibacterium acnes).